Here is a 234-residue protein sequence, read N- to C-terminus: Sugar fermentation stimulation protein A (234 aa).

Residues 201 to 220 (LLSEAQNKGVEVLAYKAELS) constitute a DNA-binding region (H-T-H motif).

This sequence belongs to the SfsA family.

In terms of biological role, binds to DNA non-specifically. Could be a regulatory factor involved in maltose metabolism. The protein is Sugar fermentation stimulation protein A of Salmonella agona (strain SL483).